Consider the following 62-residue polypeptide: Photosystem II reaction center protein Z (62 aa).

2 helical membrane-spanning segments follow: residues 8-28 and 41-61; these read AVFA…AVFA and FSGA…NSSV.

Belongs to the PsbZ family. As to quaternary structure, PSII is composed of 1 copy each of membrane proteins PsbA, PsbB, PsbC, PsbD, PsbE, PsbF, PsbH, PsbI, PsbJ, PsbK, PsbL, PsbM, PsbT, PsbY, PsbZ, Psb30/Ycf12, at least 3 peripheral proteins of the oxygen-evolving complex and a large number of cofactors. It forms dimeric complexes.

It localises to the plastid. Its subcellular location is the chloroplast thylakoid membrane. In terms of biological role, may control the interaction of photosystem II (PSII) cores with the light-harvesting antenna, regulates electron flow through the 2 photosystem reaction centers. PSII is a light-driven water plastoquinone oxidoreductase, using light energy to abstract electrons from H(2)O, generating a proton gradient subsequently used for ATP formation. In Selaginella uncinata (Blue spike-moss), this protein is Photosystem II reaction center protein Z.